The chain runs to 505 residues: Trans-cinnamate 4-monooxygenase (505 aa).

The chain crosses the membrane as a helical span at residues 3 to 23; that stretch reads LLLLEKTLLGLFAAIIVASIV. Residues 213 to 218 and A306 contribute to the (E)-cinnamate site; that span reads RSRLAQ. Residue C447 participates in heme binding.

Belongs to the cytochrome P450 family. It depends on heme as a cofactor.

The protein localises to the membrane. It catalyses the reaction (E)-cinnamate + reduced [NADPH--hemoprotein reductase] + O2 = (E)-4-coumarate + oxidized [NADPH--hemoprotein reductase] + H2O + H(+). It participates in phenylpropanoid metabolism; trans-4-coumarate biosynthesis; trans-4-coumarate from trans-cinnamate: step 1/1. In terms of biological role, catalyzes the first oxidative step of the phenylpropanoid pathway in higher plants by transforming trans-cinnamate into p-coumarate. The compounds formed by this pathway are essential components for lignification, pollination, and defense against ultraviolet light, predators and pathogens. The polypeptide is Trans-cinnamate 4-monooxygenase (CYP73A4) (Catharanthus roseus (Madagascar periwinkle)).